A 200-amino-acid chain; its full sequence is Small ribosomal subunit protein uS4 (200 aa).

Residues 91–150 (TRLDNVVYRLGITPTRRSARQLVSHKHITVNGKIVNIPSYALKVGDIIGLTEKTKSSNAI) enclose the S4 RNA-binding domain.

Belongs to the universal ribosomal protein uS4 family. Part of the 30S ribosomal subunit. Contacts protein S5. The interaction surface between S4 and S5 is involved in control of translational fidelity.

Its function is as follows. One of the primary rRNA binding proteins, it binds directly to 16S rRNA where it nucleates assembly of the body of the 30S subunit. In terms of biological role, with S5 and S12 plays an important role in translational accuracy. The chain is Small ribosomal subunit protein uS4 from Amoebophilus asiaticus (strain 5a2).